The primary structure comprises 455 residues: Nuclear mRNA export protein THP1 (455 aa).

The 212-residue stretch at Ile220–Met431 folds into the PCI domain.

As to quaternary structure, heterodimer with THP1. The SAC3-THP1 complex interacts with CDC31 and SUS1, and with the mRNA export factor MEX67-MTR2, the TREX complex component SUB2, and the nucleoporin NUP1.

It localises to the nucleus envelope. Functionally, component of the SAC3-THP1 complex, which functions in transcription-coupled mRNA export from the nucleus to the cytoplasm. SAC3-THP1 functions in docking export-competent ribonucleoprotein particles (mRNPs) to the nuclear entrance of the nuclear pore complex (nuclear basket), by association with components of the nuclear mRNA export machinery (MEX67-MTR2 and SUB2) in the nucleoplasm and the nucleoporin NUP1 at the nuclear basket. THP1 binds to RNA in vitro. The chain is Nuclear mRNA export protein THP1 (THP1) from Saccharomyces cerevisiae (strain ATCC 204508 / S288c) (Baker's yeast).